Consider the following 180-residue polypeptide: ATP-dependent protease subunit HslV (180 aa).

Residue threonine 5 is part of the active site. Na(+)-binding residues include glycine 161, cysteine 164, and threonine 167.

Belongs to the peptidase T1B family. HslV subfamily. In terms of assembly, a double ring-shaped homohexamer of HslV is capped on each side by a ring-shaped HslU homohexamer. The assembly of the HslU/HslV complex is dependent on binding of ATP.

The protein localises to the cytoplasm. The catalysed reaction is ATP-dependent cleavage of peptide bonds with broad specificity.. Allosterically activated by HslU binding. Protease subunit of a proteasome-like degradation complex believed to be a general protein degrading machinery. The chain is ATP-dependent protease subunit HslV from Campylobacter lari (strain RM2100 / D67 / ATCC BAA-1060).